We begin with the raw amino-acid sequence, 285 residues long: Eukaryotic translation initiation factor 3 subunit F-2 (285 aa).

The MPN domain maps to 11-145; that stretch reads VFLKPLVLFQ…TRLYCAVEMG (135 aa).

This sequence belongs to the eIF-3 subunit F family. Component of the eukaryotic translation initiation factor 3 (eIF-3) complex. The eIF-3 complex interacts with pix.

The protein resides in the cytoplasm. In terms of biological role, component of the eukaryotic translation initiation factor 3 (eIF-3) complex, which is involved in protein synthesis of a specialized repertoire of mRNAs and, together with other initiation factors, stimulates binding of mRNA and methionyl-tRNAi to the 40S ribosome. The eIF-3 complex specifically targets and initiates translation of a subset of mRNAs involved in cell proliferation. This is Eukaryotic translation initiation factor 3 subunit F-2 from Drosophila simulans (Fruit fly).